The chain runs to 251 residues: Putative mediator of RNA polymerase II transcription subunit 18 (251 aa).

The protein belongs to the Mediator complex subunit 18 family. As to quaternary structure, component of the Mediator complex.

The protein localises to the nucleus. Component of the Mediator complex, a coactivator involved in the regulated transcription of nearly all RNA polymerase II-dependent genes. Mediator functions as a bridge to convey information from gene-specific regulatory proteins to the basal RNA polymerase II transcription machinery. Mediator is recruited to promoters by direct interactions with regulatory proteins and serves as a scaffold for the assembly of a functional preinitiation complex with RNA polymerase II and the general transcription factors. This is Putative mediator of RNA polymerase II transcription subunit 18 (med18) from Dictyostelium discoideum (Social amoeba).